The sequence spans 415 residues: Homoserine O-succinyltransferase (415 aa).

The AB hydrolase-1 domain maps to 69–383; the sequence is NAVLVCHALN…PHGHDAFLLD (315 aa). Residue Ser175 is the Nucleophile of the active site. Arg245 serves as a coordination point for substrate. Residues Asp344 and His377 contribute to the active site. Asp378 provides a ligand contact to substrate.

The protein belongs to the AB hydrolase superfamily. MetX family. In terms of assembly, homodimer.

The protein localises to the cytoplasm. The enzyme catalyses L-homoserine + succinyl-CoA = O-succinyl-L-homoserine + CoA. It participates in amino-acid biosynthesis; L-methionine biosynthesis via de novo pathway; O-succinyl-L-homoserine from L-homoserine: step 1/1. Functionally, transfers a succinyl group from succinyl-CoA to L-homoserine, forming succinyl-L-homoserine. This Bordetella pertussis (strain Tohama I / ATCC BAA-589 / NCTC 13251) protein is Homoserine O-succinyltransferase.